The chain runs to 34 residues: Trypsin inhibitor (34 aa).

Intrachain disulfides connect Cys-7-Cys-29 and Cys-11-Cys-25.

Its subcellular location is the secreted. Its function is as follows. Inhibits trypsin. This Veronica hederifolia (Ivy-leaved speedwell) protein is Trypsin inhibitor.